The primary structure comprises 803 residues: Phosphoribosylformylglycinamidine synthase subunit PurL (803 aa).

Residue His65 is part of the active site. Residues Tyr68 and Lys107 each coordinate ATP. Residue Glu109 coordinates Mg(2+). Residues 110 to 113 (SHNH) and Arg132 each bind substrate. Catalysis depends on His111, which acts as the Proton acceptor. Asp133 provides a ligand contact to Mg(2+). Residue Gln256 participates in substrate binding. Asp284 contributes to the Mg(2+) binding site. 328-330 (ESQ) serves as a coordination point for substrate. Asn537 and Gly574 together coordinate ATP. Residue Asn575 coordinates Mg(2+). Substrate is bound at residue Ser577.

Belongs to the FGAMS family. Monomer. Part of the FGAM synthase complex composed of 1 PurL, 1 PurQ and 2 PurS subunits.

The protein localises to the cytoplasm. It carries out the reaction N(2)-formyl-N(1)-(5-phospho-beta-D-ribosyl)glycinamide + L-glutamine + ATP + H2O = 2-formamido-N(1)-(5-O-phospho-beta-D-ribosyl)acetamidine + L-glutamate + ADP + phosphate + H(+). It functions in the pathway purine metabolism; IMP biosynthesis via de novo pathway; 5-amino-1-(5-phospho-D-ribosyl)imidazole from N(2)-formyl-N(1)-(5-phospho-D-ribosyl)glycinamide: step 1/2. Functionally, part of the phosphoribosylformylglycinamidine synthase complex involved in the purines biosynthetic pathway. Catalyzes the ATP-dependent conversion of formylglycinamide ribonucleotide (FGAR) and glutamine to yield formylglycinamidine ribonucleotide (FGAM) and glutamate. The FGAM synthase complex is composed of three subunits. PurQ produces an ammonia molecule by converting glutamine to glutamate. PurL transfers the ammonia molecule to FGAR to form FGAM in an ATP-dependent manner. PurS interacts with PurQ and PurL and is thought to assist in the transfer of the ammonia molecule from PurQ to PurL. This chain is Phosphoribosylformylglycinamidine synthase subunit PurL, found in Prochlorococcus marinus (strain NATL1A).